The primary structure comprises 220 residues: Ribosomal RNA small subunit methyltransferase G (220 aa).

S-adenosyl-L-methionine-binding positions include Gly-82, Leu-87, 105–107, 133–134, and Arg-147; these read DST and VE.

The protein belongs to the methyltransferase superfamily. RNA methyltransferase RsmG family.

The protein resides in the cytoplasm. In terms of biological role, specifically methylates the N7 position of a guanine in 16S rRNA. The polypeptide is Ribosomal RNA small subunit methyltransferase G (Chlorobium limicola (strain DSM 245 / NBRC 103803 / 6330)).